The following is a 332-amino-acid chain: Biotin synthase (332 aa).

In terms of domain architecture, Radical SAM core spans 53–282 (HFGKKVKLNM…TKEIRISGGR (230 aa)). Residues Cys-71, Cys-75, and Cys-78 each coordinate [4Fe-4S] cluster. 4 residues coordinate [2Fe-2S] cluster: Cys-115, Cys-147, Cys-207, and Arg-277.

Belongs to the radical SAM superfamily. Biotin synthase family. Homodimer. [4Fe-4S] cluster serves as cofactor. Requires [2Fe-2S] cluster as cofactor.

It carries out the reaction (4R,5S)-dethiobiotin + (sulfur carrier)-SH + 2 reduced [2Fe-2S]-[ferredoxin] + 2 S-adenosyl-L-methionine = (sulfur carrier)-H + biotin + 2 5'-deoxyadenosine + 2 L-methionine + 2 oxidized [2Fe-2S]-[ferredoxin]. It participates in cofactor biosynthesis; biotin biosynthesis; biotin from 7,8-diaminononanoate: step 2/2. Its function is as follows. Catalyzes the conversion of dethiobiotin (DTB) to biotin by the insertion of a sulfur atom into dethiobiotin via a radical-based mechanism. This Bacillus mycoides (strain KBAB4) (Bacillus weihenstephanensis) protein is Biotin synthase.